The sequence spans 543 residues: Sensor histidine kinase DcuS (543 aa).

The Cytoplasmic portion of the chain corresponds to 1 to 20 (MRHSLPYRMLRKRPMKLSTT). The chain crosses the membrane as a helical span at residues 21-41 (VILMVSAVLFSVLLVVHLIYF). Residues 42 to 181 (SQISDMTRDG…VTQQINDSRW (140 aa)) lie on the Periplasmic side of the membrane. Residues 107-110 (RYSH), K121, 140-142 (GFL), and R147 contribute to the (R)-malate site. The helical transmembrane segment at 182–202 (SIIWSVLFGMLVGLIGTCILV) threads the bilayer. The Cytoplasmic portion of the chain corresponds to 203–543 (KVLKKILFGL…IPWDGERSNR (341 aa)). One can recognise a PAS domain in the interval 212–323 (LEPYEISTLF…IIGAISTFRD (112 aa)). The 193-residue stretch at 346–538 (ERSHEFMNKL…QFFVQIPWDG (193 aa)) folds into the Histidine kinase domain. The residue at position 349 (H349) is a Phosphohistidine; by autocatalysis.

Homodimer. Autophosphorylated. The phosphoryl group is rapidly transferred to DcuR.

The protein resides in the cell inner membrane. It carries out the reaction ATP + protein L-histidine = ADP + protein N-phospho-L-histidine.. In terms of biological role, member of the two-component regulatory system DcuR/DcuS. Involved in the C4-dicarboxylate-stimulated regulation of the genes encoding the anaerobic fumarate respiratory system (frdABCD; nuoAN; dcuB; sdhCDAB; etc.). Weakly regulates the aerobic C4-dicarboxylate transporter dctA. Activates DcuR by phosphorylation. This is Sensor histidine kinase DcuS (dcuS) from Escherichia coli O157:H7.